The following is a 331-amino-acid chain: 5'-AMP-activated protein kinase subunit gamma-1 (331 aa).

The span at 1–12 shows a compositional bias: polar residues; the sequence is METVISSDSSPA. A disordered region spans residues 1 to 26; sequence METVISSDSSPAVENEHPQETPESNN. 3 CBS domains span residues 43 to 103, 125 to 187, and 198 to 260; these read PTSS…KSAL, SFKP…PKPE, and IGTY…NLDV. ADP is bound by residues R70, 85–90, V130, 151–152, and K170; these read MLTITD and HR. AMP-binding positions include R70, 85-90, V130, H151, 151-152, K170, T200, A205, 226-227, and 242-245; these read MLTITD, HR, SA, and SKFD. Residues R70, 85 to 90, V130, 151 to 152, R152, and K170 each bind ATP; these read MLTITD and HR. Residues 138 to 159 carry the AMPK pseudosubstrate motif; it reads LFDAVSSLIRNKIHRLPVIDPE. 242 to 245 contributes to the ADP binding site; that stretch reads SKFD. 242–245 is a binding site for ATP; sequence SKFD. The residue at position 261 (S261) is a Phosphoserine; by ULK1. T263 is modified (phosphothreonine; by ULK1). Position 269 (R269) interacts with ADP. Residue R269 participates in AMP binding. R269 provides a ligand contact to ATP. S270 is modified (phosphoserine; by ULK1). Residues 272-329 enclose the CBS 4 domain; it reads YFEGVLKCYLHETLETIINRLVEAEVHRLVVVDENDVVKGIVSLSDILQALVLTGGEK. Residues L277 and 298 to 299 contribute to the ADP site; that span reads HR. Residues L277, H298, 298 to 299, and 314 to 317 each bind AMP; these read HR and SLSD. Residues L277 and 298-299 contribute to the ATP site; that span reads HR.

This sequence belongs to the 5'-AMP-activated protein kinase gamma subunit family. AMPK is a heterotrimer of an alpha catalytic subunit (PRKAA1 or PRKAA2), a beta (PRKAB1 or PRKAB2) and a gamma non-catalytic subunits (PRKAG1, PRKAG2 or PRKAG3). Interacts with FNIP1 and FNIP2. Post-translationally, phosphorylated by ULK1 and ULK2; leading to negatively regulate AMPK activity and suggesting the existence of a regulatory feedback loop between ULK1, ULK2 and AMPK. In terms of processing, glycosylated; O-GlcNAcylated by OGT, promoting the AMP-activated protein kinase (AMPK) activity.

Functionally, AMP/ATP-binding subunit of AMP-activated protein kinase (AMPK), an energy sensor protein kinase that plays a key role in regulating cellular energy metabolism. In response to reduction of intracellular ATP levels, AMPK activates energy-producing pathways and inhibits energy-consuming processes: inhibits protein, carbohydrate and lipid biosynthesis, as well as cell growth and proliferation. AMPK acts via direct phosphorylation of metabolic enzymes, and by longer-term effects via phosphorylation of transcription regulators. Also acts as a regulator of cellular polarity by remodeling the actin cytoskeleton; probably by indirectly activating myosin. Gamma non-catalytic subunit mediates binding to AMP, ADP and ATP, leading to activate or inhibit AMPK: AMP-binding results in allosteric activation of alpha catalytic subunit (PRKAA1 or PRKAA2) both by inducing phosphorylation and preventing dephosphorylation of catalytic subunits. ADP also stimulates phosphorylation, without stimulating already phosphorylated catalytic subunit. ATP promotes dephosphorylation of catalytic subunit, rendering the AMPK enzyme inactive. The sequence is that of 5'-AMP-activated protein kinase subunit gamma-1 (PRKAG1) from Homo sapiens (Human).